The sequence spans 120 residues: UPF0342 protein Csac_0863 (120 aa).

Belongs to the UPF0342 family.

The polypeptide is UPF0342 protein Csac_0863 (Caldicellulosiruptor saccharolyticus (strain ATCC 43494 / DSM 8903 / Tp8T 6331)).